The sequence spans 191 residues: MPKIKMIVGLGNIGKEYQDTRHNVGEWFIAKIAQDNNQSFSSNTKLNCNLAKVSIDYNNVVLVFPTTYMNNSGLAVSKVANFYKIAPAEILVAHDELDIDSGEIRLKKGGGHGGHNGLRSINQHLGTNDYLRLRIGIGHPGHKSKVANYVLSNPSIAQKKDIDSAIDNGICFLDDIINYKLEPVMQKLHTK.

Residue Y17 coordinates tRNA. The active-site Proton acceptor is H22. TRNA is bound by residues Y68, N70, and N116.

It belongs to the PTH family. In terms of assembly, monomer.

The protein localises to the cytoplasm. It catalyses the reaction an N-acyl-L-alpha-aminoacyl-tRNA + H2O = an N-acyl-L-amino acid + a tRNA + H(+). Its function is as follows. Hydrolyzes ribosome-free peptidyl-tRNAs (with 1 or more amino acids incorporated), which drop off the ribosome during protein synthesis, or as a result of ribosome stalling. Catalyzes the release of premature peptidyl moieties from peptidyl-tRNA molecules trapped in stalled 50S ribosomal subunits, and thus maintains levels of free tRNAs and 50S ribosomes. The chain is Peptidyl-tRNA hydrolase from Francisella tularensis subsp. holarctica (strain FTNF002-00 / FTA).